The sequence spans 428 residues: Enolase (428 aa).

Q163 is a (2R)-2-phosphoglycerate binding site. E205 functions as the Proton donor in the catalytic mechanism. Residues D242, E283, and D310 each contribute to the Mg(2+) site. Positions 335, 364, 365, and 386 each coordinate (2R)-2-phosphoglycerate. The active-site Proton acceptor is the K335.

This sequence belongs to the enolase family. Mg(2+) serves as cofactor.

The protein resides in the cytoplasm. It localises to the secreted. Its subcellular location is the cell surface. The catalysed reaction is (2R)-2-phosphoglycerate = phosphoenolpyruvate + H2O. It functions in the pathway carbohydrate degradation; glycolysis; pyruvate from D-glyceraldehyde 3-phosphate: step 4/5. Its function is as follows. Catalyzes the reversible conversion of 2-phosphoglycerate (2-PG) into phosphoenolpyruvate (PEP). It is essential for the degradation of carbohydrates via glycolysis. This chain is Enolase, found in Streptomyces avermitilis (strain ATCC 31267 / DSM 46492 / JCM 5070 / NBRC 14893 / NCIMB 12804 / NRRL 8165 / MA-4680).